Reading from the N-terminus, the 1667-residue chain is Myomesin-1 (1667 aa).

Ser-124 and Ser-142 each carry phosphoserine. A compositionally biased stretch (low complexity) spans 192 to 210 (SKQSTASKQSATSKRTTST). Residues 192–217 (SKQSTASKQSATSKRTTSTLQREETF) are disordered. Ig-like C2-type domains lie at 258-349 (PEFI…ASVV) and 376-478 (PYGY…AYVF). 3 consecutive Fibronectin type-III domains span residues 492–587 (APLD…ALDP), 620–714 (PPTD…VVGD), and 721–814 (APGK…VKAA). A disordered region spans residues 818–915 (GVSPDVWPQL…PKKKKDPVAV (98 aa)). 2 positions are modified to phosphoserine: Ser-863 and Ser-867. The segment covering 885–894 (EPLSSPPQEA) has biased composition (low complexity). Fibronectin type-III domains are found at residues 918-1016 (APYD…CEEW) and 1023-1122 (PPHS…TRPG). Phosphoserine is present on Ser-1036. 3 consecutive Ig-like C2-type domains span residues 1114–1212 (PVVA…EEMK), 1340–1426 (PHFA…LKLV), and 1555–1644 (RVLG…FTVS).

As to quaternary structure, homodimer. Interacts with TTN/titin and PNKD. In terms of tissue distribution, ubiquitously expressed in all striated muscles. Expressed in all fiber types.

It is found in the cytoplasm. The protein resides in the myofibril. It localises to the sarcomere. Its subcellular location is the m line. Functionally, may link the intermediate filament cytoskeleton to the M-disk of the myofibrils in striated muscle. May also contact myosin filaments. Also binds beta-integrins. This chain is Myomesin-1 (Myom1), found in Mus musculus (Mouse).